We begin with the raw amino-acid sequence, 1327 residues long: Putative ATP-dependent RNA helicase ucp12 (1327 aa).

Disordered regions lie at residues 1-58 (MGSK…KQLV) and 201-222 (QAAR…NEKV). Basic and acidic residues predominate over residues 18-41 (SKNKEKNIKGKKKNSLDPIEKNKQ). A compositionally biased stretch (polar residues) spans 42–58 (ETAGLQTTSRPTAKQLV). The UBA domain occupies 276-315 (EPDTSIVNDLISLGFRDIHAKEACQYCVSLEDALEWLIIH). The RWD domain occupies 405–504 (DDVSALQSIL…NHLQENIEDF (100 aa)). In terms of domain architecture, Helicase ATP-binding spans 587–756 (MDAIQHSQVV…FGNAGHLHIH (170 aa)). An ATP-binding site is contributed by 600–607 (GETGSGKS). A DEAH box motif is present at residues 703–706 (DEVH). Residues 797-968 (LISRLVSSID…QVCLNVVPLV (172 aa)) enclose the Helicase C-terminal domain.

It belongs to the DEAD box helicase family. DEAH subfamily.

The protein localises to the cytoplasm. The catalysed reaction is ATP + H2O = ADP + phosphate + H(+). Its function is as follows. Probable ATP-binding RNA helicase. The polypeptide is Putative ATP-dependent RNA helicase ucp12 (ucp12) (Schizosaccharomyces pombe (strain 972 / ATCC 24843) (Fission yeast)).